The sequence spans 644 residues: Translation factor GUF1, mitochondrial (644 aa).

A mitochondrion-targeting transit peptide spans 1–14 (MLRKAFRYLVPVRC). Residues 46 to 227 (ERYRNFSIVA…AIVDRIPPPT (182 aa)) form the tr-type G domain. GTP is bound by residues 55–62 (AHVDHGKS), 120–124 (DTPGH), and 174–177 (NKID).

This sequence belongs to the TRAFAC class translation factor GTPase superfamily. Classic translation factor GTPase family. LepA subfamily.

The protein resides in the mitochondrion inner membrane. The enzyme catalyses GTP + H2O = GDP + phosphate + H(+). Its function is as follows. Promotes mitochondrial protein synthesis. May act as a fidelity factor of the translation reaction, by catalyzing a one-codon backward translocation of tRNAs on improperly translocated ribosomes. Binds to mitochondrial ribosomes in a GTP-dependent manner. The sequence is that of Translation factor GUF1, mitochondrial from Eremothecium gossypii (strain ATCC 10895 / CBS 109.51 / FGSC 9923 / NRRL Y-1056) (Yeast).